Here is a 159-residue protein sequence, read N- to C-terminus: Prs ADP-ribosylating antitoxin (159 aa).

A sufficient to neutralize toxin region spans residues 99 to 159; it reads EDMVEESGET…LAQIQSGAFA (61 aa).

The protein belongs to the MbcA/ParS/Xre antitoxin family. Forms heterotetrameric ParS(2)-ParT(2) complexes. The 2 antitoxin fragments do not make contact in the crystal structure.

In terms of biological role, antitoxin component of a type II toxin-antitoxin (TA) system. Neutralizes the bacteriostatic effect of cognate toxin ParT by inserting into its active site. The polypeptide is Prs ADP-ribosylating antitoxin (Sphingobium sp. (strain YBL2)).